Consider the following 290-residue polypeptide: Nucleoid occlusion protein (290 aa).

The segment at residues 153–172 is a DNA-binding region (H-T-H motif); sequence EALAQRLGKGQSTIANKLRL.

Belongs to the ParB family.

The protein localises to the cytoplasm. The protein resides in the nucleoid. In terms of biological role, effects nucleoid occlusion by binding relatively nonspecifically to DNA and preventing the assembly of the division machinery in the vicinity of the nucleoid, especially under conditions that disturb the cell cycle. It helps to coordinate cell division and chromosome segregation by preventing the formation of the Z ring through the nucleoid, which would cause chromosome breakage. This chain is Nucleoid occlusion protein, found in Bacillus cereus (strain ATCC 10987 / NRS 248).